A 1060-amino-acid chain; its full sequence is Beta-galactosidase (1060 aa).

Substrate contacts are provided by Asn110 and Asp209. Position 209 (Asp209) interacts with Na(+). Residues Glu432, His434, and Glu477 each coordinate Mg(2+). Residues Glu477 and 553–556 contribute to the substrate site; that span reads EYAH. Residue Glu477 is the Proton donor of the active site. Residue Glu553 is the Nucleophile of the active site. Asn613 contacts Mg(2+). The Na(+) site is built by Phe617 and Asn620. Residues Asn620 and Trp1035 each coordinate substrate.

The protein belongs to the glycosyl hydrolase 2 family. As to quaternary structure, homotetramer. Requires Mg(2+) as cofactor. Na(+) is required as a cofactor.

It catalyses the reaction Hydrolysis of terminal non-reducing beta-D-galactose residues in beta-D-galactosides.. This chain is Beta-galactosidase, found in Yersinia pestis bv. Antiqua (strain Antiqua).